Consider the following 273-residue polypeptide: Large ribosomal subunit protein uL29m (273 aa).

Residues Pro-247 to Glu-258 are compositionally biased toward basic and acidic residues. The interval Pro-247 to Asn-273 is disordered.

This sequence belongs to the universal ribosomal protein uL29 family. As to quaternary structure, component of the mitochondrial large ribosomal subunit. Mature mitochondrial ribosomes consist of a small (37S) and a large (54S) subunit. The 37S subunit contains at least 33 different proteins and 1 molecule of RNA (15S). The 54S subunit contains at least 45 different proteins and 1 molecule of RNA (21S).

Its subcellular location is the mitochondrion. The sequence is that of Large ribosomal subunit protein uL29m (mrpl4) from Aspergillus niger (strain ATCC MYA-4892 / CBS 513.88 / FGSC A1513).